We begin with the raw amino-acid sequence, 1623 residues long: ATP-binding cassette sub-family A member 9 (1623 aa).

The helical transmembrane segment at 31–51 threads the bilayer; the sequence is LLEWLFSLLLILFVYQLSSNL. A glycan (N-linked (GlcNAc...) asparagine) is linked at asparagine 120. 6 consecutive transmembrane segments (helical) span residues 225-245, 265-285, 295-315, 329-349, 354-374, and 398-418; these read FFIFFCVISFSSLIYYLSVNI, AFWLSWSLMYAGFILVVAVLM, VVLTGFMVVFLLFLFYGLSLI, FLTGLAIFILTVFWGSLGFTA, LPAFVEWTLCFLSPFAFTTGM, and LIMATLFMLVLDALLYLVLAL. An ABC transporter 1 domain is found at 481–716; sequence IRIKNLKKEY…WGIGYHLSLH (236 aa). 517–524 contacts ATP; it reads GHSGAGKT. 7 consecutive transmembrane segments (helical) span residues 863 to 883, 1025 to 1045, 1071 to 1091, 1107 to 1127, 1135 to 1155, 1163 to 1183, and 1199 to 1219; these read LMTVLLLFGISFVPQLLEHLV, AFFWIPVAASLTPYIAMGSIS, LVDIPIYFLILFLMQIMDSVF, IPCSIGYASSLIFMTYVISFI, SGIWSFFFLIVTIFFIIATDI, LLICTFLVPPFTLIGSLLIFS, and QLVFLALLIPYLHFLLFFFIL. The ABC transporter 2 domain occupies 1287 to 1520; sequence LRKEYIGRTK…FGKDYLLEMK (234 aa). 1325–1332 is an ATP binding site; the sequence is GHNGAGKS.

Belongs to the ABC transporter superfamily. ABCA family. In terms of tissue distribution, highly expressed in heart and to lower extent in kidney, brain and spleen. Weakly expressed in developing and adult brains. Weakly expressed in the cerebellar granular layer at P14 and P21.

It localises to the membrane. Functionally, transporter that may play a role in monocyte differentiation and lipid transport and homeostasis. The sequence is that of ATP-binding cassette sub-family A member 9 (Abca9) from Mus musculus (Mouse).